We begin with the raw amino-acid sequence, 526 residues long: MSYPQEVNKRRTFAIISHPDAGKTTITEKVLLYGNAIQTAGSVKGKGSSAHAKSDWMEMEKQRGISITTSVMQFPYNNCLVNLLDTPGHEDFSEDTYRTLTAVDSCLMVIDSAKGVEERTIKLMEVTRLRDTPILTFMNKLDRDIRDPMELLDEVESVLKIRCAPITWPIGCGKLFKGVYHIAKDETYLYQSGQGSTIQEVRIVKGLSSPELDAAVGDDLANQLREELELVQGASNEFDHEAFINGELTPVFFGTALGNFGVDHFLDGLTEWAPKPQARQTDVRTVESSEEKFSGFVFKIQANMDPKHRDRVAFMRVVSGKYEKGMKLKHVRIGKDVVISDALTFMAGDRSHAEEAYAGDIIGLHNHGTIQIGDTFTQGEVMKFTGIPNFAPELFRRIRLKDPLKQKQLLKGLVQLSEEGAVQVFRPLMNNDLIVGAVGVLQFDVVVSRLKTEYNVEAIYEAVNVATARWVECCDAKKFEEFKRKNEQNLALDGGDNLTYIAPTMVNLNLAQERYPDINFFKTREH.

The tr-type G domain maps to 8-277 (NKRRTFAIIS…GLTEWAPKPQ (270 aa)). GTP is bound by residues 17-24 (SHPDAGKT), 85-89 (DTPGH), and 139-142 (NKLD).

It belongs to the TRAFAC class translation factor GTPase superfamily. Classic translation factor GTPase family. PrfC subfamily.

Its subcellular location is the cytoplasm. Increases the formation of ribosomal termination complexes and stimulates activities of RF-1 and RF-2. It binds guanine nucleotides and has strong preference for UGA stop codons. It may interact directly with the ribosome. The stimulation of RF-1 and RF-2 is significantly reduced by GTP and GDP, but not by GMP. The protein is Peptide chain release factor 3 of Actinobacillus pleuropneumoniae serotype 7 (strain AP76).